A 256-amino-acid chain; its full sequence is Endonuclease NucS (256 aa).

Residues 62 to 97 (AAKSAQHSRESVAGGAVDGDSATHSPESVAAGEPEK) are disordered.

This sequence belongs to the NucS endonuclease family.

The protein localises to the cytoplasm. In terms of biological role, cleaves both 3' and 5' ssDNA extremities of branched DNA structures. The protein is Endonuclease NucS of Bifidobacterium longum (strain NCC 2705).